The following is a 362-amino-acid chain: Protein-glutamate methylesterase/protein-glutamine glutaminase 1 (362 aa).

The Response regulatory domain occupies 10–127 (RVLVVDDSSF…ADAQRVFREE (118 aa)). 4-aspartylphosphate is present on Asp61. The CheB-type methylesterase domain maps to 163 to 357 (PRPSQALAGK…LPLTQIGSEI (195 aa)). Residues Ser181, His208, and Asp306 contribute to the active site.

This sequence belongs to the CheB family. Phosphorylated by CheA. Phosphorylation of the N-terminal regulatory domain activates the methylesterase activity.

The protein resides in the cytoplasm. It carries out the reaction [protein]-L-glutamate 5-O-methyl ester + H2O = L-glutamyl-[protein] + methanol + H(+). The enzyme catalyses L-glutaminyl-[protein] + H2O = L-glutamyl-[protein] + NH4(+). Its function is as follows. Involved in chemotaxis. Part of a chemotaxis signal transduction system that modulates chemotaxis in response to various stimuli. Catalyzes the demethylation of specific methylglutamate residues introduced into the chemoreceptors (methyl-accepting chemotaxis proteins or MCP) by CheR. Also mediates the irreversible deamidation of specific glutamine residues to glutamic acid. In Geobacter sulfurreducens (strain ATCC 51573 / DSM 12127 / PCA), this protein is Protein-glutamate methylesterase/protein-glutamine glutaminase 1.